We begin with the raw amino-acid sequence, 225 residues long: DNA-binding response regulator MtrA (225 aa).

Residues 4–117 enclose the Response regulatory domain; that stretch reads RILVVDDDAS…ELVARVRARL (114 aa). Asp-53 is modified (4-aspartylphosphate). Residues 125 to 224 constitute a DNA-binding region (ompR/PhoB-type); sequence AEMLSIADVE…VRGVGYKAGP (100 aa).

Phosphorylated by MtrB.

In terms of biological role, member of the two-component regulatory system MtrA/MtrB. The polypeptide is DNA-binding response regulator MtrA (mtrA) (Mycolicibacterium paratuberculosis (strain ATCC BAA-968 / K-10) (Mycobacterium paratuberculosis)).